The following is a 928-amino-acid chain: TBC1 domain family member 2A (928 aa).

Methionine 1 is subject to N-acetylmethionine. Over residues 1–19 (MEGAGENAPESSSSAPGSE) the composition is skewed to low complexity. Residues 1 to 39 (MEGAGENAPESSSSAPGSEESARDPQVPPPEEESGDCAR) are disordered. Residues 1-169 (MEGAGENAPE…AGNGPVLHLE (169 aa)) form an interaction with CADH1 region. In terms of domain architecture, PH spans 45–142 (PKKLCGYLSK…WLQQLQMKRW (98 aa)). The tract at residues 225–275 (NKQAQGTGHEPPGEDSPQSGEPQREEQPLASDASTPGREPEDSPKPAPKPS) is disordered. An interaction with RAC1 region spans residues 295–433 (SEGITRNRTA…KVTQDFTHPP (139 aa)). A coiled-coil region spans residues 298–416 (ITRNRTAQEK…LMDKNHAKQQ (119 aa)). Serine 436 bears the Phosphoserine mark. One can recognise a Rab-GAP TBC domain in the interval 625-817 (GVPREHRPRV…RVWDAFLYEG (193 aa)). Residues 875–913 (MKQLRQLRMVHRERLEAELRELEQLKAEYLERRASRRRA) adopt a coiled-coil conformation. Residues serine 915 and serine 920 each carry the phosphoserine modification.

In terms of assembly, interacts with activated RAC1 and CDH1. In terms of tissue distribution, expressed in a broad range of tissues, especially in kidney, liver, lung and placenta. Also expressed in keratinocytes and epithelia-containing organs. Isoform 2 is differentially expressed in prostate normal and cancer cells (at protein level).

Its subcellular location is the cytoplasm. The protein resides in the cytoplasmic vesicle. It localises to the cell junction. Functionally, acts as a GTPase-activating protein for RAB7A. Signal effector acting as a linker between RAC1 and RAB7A, leading to RAB7A inactivation and subsequent inhibition of cadherin degradation and reduced cell-cell adhesion. The polypeptide is TBC1 domain family member 2A (TBC1D2) (Homo sapiens (Human)).